Consider the following 33-residue polypeptide: Potassium channel toxin alpha-KTx 10.5 (33 aa).

Intrachain disulfides connect Cys-4–Cys-23, Cys-9–Cys-28, and Cys-13–Cys-30.

As to expression, expressed by the venom gland.

The protein resides in the secreted. Functionally, inhibits less than 5% of human voltage-gated potassium (Kv) channel Kv1.3/KCNA3 currents at 100nM concentration and does not block human Kv1.1/KCNA1 and Kv1.2/KCNA2 currents. The chain is Potassium channel toxin alpha-KTx 10.5 from Centruroides bonito (Scorpion).